A 527-amino-acid polypeptide reads, in one-letter code: Baeyer-Villiger monooxygenase (527 aa).

FAD contacts are provided by residues serine 36, glutamate 56, threonine 64–valine 67, aspartate 76, tyrosine 82, and isoleucine 125. Residue alanine 74–aspartate 76 coordinates NADP(+). Residues threonine 199–glutamine 205, arginine 222–threonine 223, and lysine 308–arginine 309 contribute to the NADP(+) site. An FAD-binding site is contributed by methionine 415.

It belongs to the FAD-binding monooxygenase family. FAD serves as cofactor.

Its function is as follows. Catalyzes a Baeyer-Villiger oxidation reaction, i.e. the insertion of an oxygen atom into a carbon-carbon bond adjacent to a carbonyl, which converts ketones to esters or lactones using NADPH and/or NADH as an electron donor. Thus, can convert bicyclo[3.2.0]hept-2-en-6-one into the oxidative lactone products 2-oxabicyclo[3.3.0]oct-6-en-3-one and 3-oxabicyclo[3.3.0]oct-6-en-2-one. Is also able to catalyze the sulfoxidation of methyl phenyl sulfide (thioanisole). The sequence is that of Baeyer-Villiger monooxygenase from Pseudomonas aeruginosa (strain ATCC 15692 / DSM 22644 / CIP 104116 / JCM 14847 / LMG 12228 / 1C / PRS 101 / PAO1).